Consider the following 117-residue polypeptide: Large ribosomal subunit protein uL22 (117 aa).

This sequence belongs to the universal ribosomal protein uL22 family. In terms of assembly, part of the 50S ribosomal subunit.

In terms of biological role, this protein binds specifically to 23S rRNA; its binding is stimulated by other ribosomal proteins, e.g. L4, L17, and L20. It is important during the early stages of 50S assembly. It makes multiple contacts with different domains of the 23S rRNA in the assembled 50S subunit and ribosome. Functionally, the globular domain of the protein is located near the polypeptide exit tunnel on the outside of the subunit, while an extended beta-hairpin is found that lines the wall of the exit tunnel in the center of the 70S ribosome. The sequence is that of Large ribosomal subunit protein uL22 from Synechococcus elongatus (strain ATCC 33912 / PCC 7942 / FACHB-805) (Anacystis nidulans R2).